The sequence spans 242 residues: Uridylate kinase (242 aa).

K15–G18 lines the ATP pocket. G57 is a binding site for UMP. 2 residues coordinate ATP: G58 and R62. UMP-binding positions include D78 and T139–T146. 3 residues coordinate ATP: T166, Y172, and D175.

This sequence belongs to the UMP kinase family. As to quaternary structure, homohexamer.

The protein localises to the cytoplasm. It carries out the reaction UMP + ATP = UDP + ADP. It functions in the pathway pyrimidine metabolism; CTP biosynthesis via de novo pathway; UDP from UMP (UMPK route): step 1/1. Inhibited by UTP. In terms of biological role, catalyzes the reversible phosphorylation of UMP to UDP. In Acinetobacter baumannii (strain ATCC 17978 / DSM 105126 / CIP 53.77 / LMG 1025 / NCDC KC755 / 5377), this protein is Uridylate kinase.